We begin with the raw amino-acid sequence, 424 residues long: Hemagglutinin-esterase (424 aa).

An N-terminal signal peptide occupies residues 1–16 (MFLLPRFVLVSCIIGS). The segment at 7–127 (FVLVSCIIGS…SNDIWMQNKG (121 aa)) is esterase domain 1. Topologically, residues 17–392 (LGFDNPPTNV…PICVYDPLPI (376 aa)) are virion surface. The active-site Nucleophile is the Ser-40. A disulfide bridge connects residues Cys-44 and Cys-65. N-linked (GlcNAc...) asparagine; by host glycosylation is found at Asn-54, Asn-89, Asn-153, Asn-236, and Asn-301. 3 disulfides stabilise this stretch: Cys-113/Cys-162, Cys-197/Cys-276, and Cys-205/Cys-249. Residues 128–266 (LFYTQVYKNM…GNYLAISNEL (139 aa)) form a receptor binding region. The segment at 267-379 (LLTVPTKAIC…RCPTAADINT (113 aa)) is esterase domain 2. Cys-307 and Cys-312 are joined by a disulfide. Asn-316 is a glycosylation site (N-linked (GlcNAc...) asparagine; by host). Residues Asp-326 and His-329 each act as charge relay system in the active site. A disulfide bond links Cys-347 and Cys-371. Asn-358 carries N-linked (GlcNAc...) asparagine; by host glycosylation. The helical transmembrane segment at 393 to 413 (ILLGILLSVAVIIIVVLLLYF) threads the bilayer. At 414-424 (MVDNGTRLHDA) the chain is on the intravirion side. N-linked (GlcNAc...) asparagine; by host glycosylation occurs at Asn-417.

This sequence belongs to the influenza type C/coronaviruses hemagglutinin-esterase family. In terms of assembly, homodimer; disulfide-linked. Forms a complex with the M protein in the pre-Golgi. Associates then with S-M complex to form a ternary complex S-M-HE. N-glycosylated in the host RER.

The protein resides in the virion membrane. Its subcellular location is the host cell membrane. It catalyses the reaction N-acetyl-9-O-acetylneuraminate + H2O = N-acetylneuraminate + acetate + H(+). The catalysed reaction is N-acetyl-4-O-acetylneuraminate + H2O = N-acetylneuraminate + acetate + H(+). Its function is as follows. Structural protein that makes short spikes at the surface of the virus. Contains receptor binding and receptor-destroying activities. Mediates de-O-acetylation of N-acetyl-4-O-acetylneuraminic acid, which is probably the receptor determinant recognized by the virus on the surface of erythrocytes and susceptible cells. This receptor-destroying activity is important for virus release as it probably helps preventing self-aggregation and ensures the efficient spread of the progeny virus from cell to cell. May serve as a secondary viral attachment protein for initiating infection, the spike protein being the major one. May become a target for both the humoral and the cellular branches of the immune system. The protein is Hemagglutinin-esterase of Bos taurus (Bovine).